The chain runs to 829 residues: Probable receptor-like protein kinase At5g59700 (829 aa).

The signal sequence occupies residues 1 to 24 (MGGEKFGFLIWILSIPCLIFLCYG). At 25–406 (YVPVDNYLIN…SSTTKKNVGM (382 aa)) the chain is on the extracellular side. 4 N-linked (GlcNAc...) asparagine glycosylation sites follow: asparagine 40, asparagine 216, asparagine 279, and asparagine 380. A helical transmembrane segment spans residues 407–427 (IIGLTIGSLLALVVLGGFFVL). Residues 428 to 829 (YKKRGRDQDG…FSQLIKSEGR (402 aa)) lie on the Cytoplasmic side of the membrane. The Protein kinase domain maps to 482–755 (FDENRAIGVG…GDVLWNLEYA (274 aa)). ATP is bound by residues 488–496 (IGVGGFGKV) and lysine 510. The active-site Proton acceptor is the aspartate 606.

Belongs to the protein kinase superfamily. Ser/Thr protein kinase family.

It localises to the cell membrane. The sequence is that of Probable receptor-like protein kinase At5g59700 from Arabidopsis thaliana (Mouse-ear cress).